The following is a 708-amino-acid chain: Homeobox-leucine zipper protein HDG10 (708 aa).

Residues 1–24 (MDSSHNDSSSDEEGIDSNNRRHHS) form a disordered region. Positions 16 to 75 (DSNNRRHHSNHQVQRLEAFFHECPHPDDSQRRQLGNELNLKHKQIKFWFQNRRTQARIHN) form a DNA-binding region, homeobox. Positions 119-141 (LCNLQKLRTKNVILKTEYERLSS) form a coiled coil. Residues 162–188 (GPSTYGSTSNNRPASYGSSSNHLPQQS) are disordered. A compositionally biased stretch (polar residues) spans 165-188 (TYGSTSNNRPASYGSSSNHLPQQS). The START domain occupies 218 to 456 (SQLEKNRMFE…LQRMCERLSL (239 aa)).

This sequence belongs to the HD-ZIP homeobox family. Class IV subfamily. As to quaternary structure, interacts with ANT, BBM and AIL1. Expressed in exclusively in anthers with highest levels in the tapetum and pollen grains.

It localises to the nucleus. Its function is as follows. Probable transcription factor. The sequence is that of Homeobox-leucine zipper protein HDG10 from Arabidopsis thaliana (Mouse-ear cress).